A 1360-amino-acid polypeptide reads, in one-letter code: MAVSEQSQDVFPWLKSLPVAPEFRPTLAEFQDPIAYILKIEEEASRYGICKILPPLPPPSKKTSISNLNRSLAARAAARVRDGGFGACDYDGGPTFATRQQQIGFCPRKQRPVQRPVWQSGEEYSFGEFEFKAKNFEKNYLKKCGKKSQLSALEIETLYWRATVDKPFSVEYANDMPGSAFIPLSLAAARRRESGGEGGTVGETAWNMRAMSRAEGSLLKFMKEEIPGVTSPMVYVAMMFSWFAWHVEDHDLHSLNYLHMGAGKTWYGVPKDAALAFEEVVRVHGYGEELNPLVTFSTLGEKTTVMSPEVFVKAGIPCCRLVQNPGEFVVTFPGAYHSGFSHGFNFGEASNIATPEWLRMAKDAAIRRAAINYPPMVSHLQLLYDFVLALGSRVPTSINPKPRSSRLKDKARSEGERLTKKLFVQNIIHNNELLSSLGKGSPVALLPQSSSDISVCSDLRIGSHLITNQENPIQLKCEDLSSDSVVVDLSNGLKDTVSVKEKFTSLCERSRNHLASTEKDTQETLSDAERRKNDAAVALSDQRLFSCVTCGVLSFDCVAIVQPKEAAARYLMSADCSFFNDWTAASGSANLGQAARSLHPQSKEKHDVNYFYNVPVQTMDHSVKTGDQKTSTTSPTIAHKDNDVLGMLASAYGDSSDSEEEDQKGLVTPSSKGETKTYDQEGSDGHEEARDGRTSDFNCQRLTSEQNGLSKGGKSSLLEIALPFIPRSDDDSCRLHVFCLEHAAEVEQQLRPFGGINLMLLCHPEYPRIEAEAKIVAEELVINHEWNDTEFRNVTREDEETIQAALDNVEAKGGNSDWTVKLGVNLSYSAILSRSPLYSKQMPYNSIIYKAFGRSSPVASSPSKPKVSGKRSSRQRKYVVGKWCGKVWMSHQVHPFLLEQDLEGEESERSCHLRVAMDEDATGKRSFPNNVSRDSTTMFGRKYCRKRKIRAKAVPRKKLTSFKREDGVSDDTSEDHSYKQQWRASGNEEESYFETGNTASGDSSNQMSDPHKGIIRHKGYKEFESDDEVSDRSLGEEYTVRACAASESSMENGSQHSMYDHDDDDDDIDRQPRGIPRSQQTRVFRNPVSYESEDNGVYQQSGRISISNRQANRMVGEYDSAENSLEERGFCSTGKRQTRSTAKRIAKTKTVQSSRDTKGRFLQEFASGKKNEELDSYMEGPSTRLRVRHQKPSRGSLETKPKKIGKKRSGNASFSRVATEKDVEEKEEEEEEEENEEEECAAYQCNMEGCTMSFSSEKQLMLHKRNICPIKGCGKNFFSHKYLVQHQRVHSDDRPLKCPWKGCKMTFKWAWSRTEHIRVHTGARPYVCAEPDCGQTFRFVSDFSRHKRKTGHSVKKTNKR.

Ala2 carries the post-translational modification N-acetylalanine. The region spanning 20-61 (APEFRPTLAEFQDPIAYILKIEEEASRYGICKILPPLPPPSK) is the JmjN domain. Residues 203 to 369 (ETAWNMRAMS…MAKDAAIRRA (167 aa)) form the JmjC domain. 3 residues coordinate Fe cation: His246, Glu248, and His337. Residues 652 to 698 (YGDSSDSEEEDQKGLVTPSSKGETKTYDQEGSDGHEEARDGRTSDFN) are disordered. Positions 673 to 694 (GETKTYDQEGSDGHEEARDGRT) are enriched in basic and acidic residues. The Nuclear localization signal motif lies at 944–951 (CRKRKIRA). 4 disordered regions span residues 955–1012 (PRKK…DPHK), 1044–1081 (AASESSMENGSQHSMYDHDDDDDDIDRQPRGIPRSQQT), 1133–1155 (TGKRQTRSTAKRIAKTKTVQSSR), and 1172–1238 (EELD…NEEE). Composition is skewed to polar residues over residues 994-1008 (ETGNTASGDSSNQMS) and 1046-1057 (SESSMENGSQHS). Residues 1136 to 1147 (RQTRSTAKRIAK) show a composition bias toward basic residues. Acidic residues predominate over residues 1225 to 1238 (EKEEEEEEEENEEE). Residues 1243 to 1266 (YQCNMEGCTMSFSSEKQLMLHKRN) form a C2H2-type 1; degenerate zinc finger. Residues Cys1245, Cys1250, His1263, Cys1268, Cys1273, His1280, His1286, His1290, Cys1298, Cys1303, His1316, His1320, Cys1328, Cys1333, His1346, and His1352 each contribute to the Zn(2+) site. C2H2-type zinc fingers lie at residues 1266 to 1290 (NICPIKGCGKNFFSHKYLVQHQRVH), 1296 to 1320 (LKCPWKGCKMTFKWAWSRTEHIRVH), and 1326 to 1352 (YVCAEPDCGQTFRFVSDFSRHKRKTGH). Residues 1275-1348 (KNFFSHKYLV…FVSDFSRHKR (74 aa)) are DNA-binding.

It belongs to the JHDM3 histone demethylase family. In terms of assembly, forms homooligomers. Interacts with BZR2 (via N-terminus). Interacts with BRM in the SWI/SNF complex. Interacts (via N-terminus) with NFYC9. Associates with INO80. As to expression, highly expressed in the shoot apical meristem and primary and secondary root tips, and lower expression in cotyledons, leaves and root axis along vascular tissues. Detected in inflorescences, stems and siliques. Present in seeds.

The protein localises to the nucleus. The catalysed reaction is N(6),N(6),N(6)-trimethyl-L-lysyl(27)-[histone H3] + 2-oxoglutarate + O2 = N(6),N(6)-dimethyl-L-lysyl(27)-[histone H3] + formaldehyde + succinate + CO2. It carries out the reaction N(6),N(6)-dimethyl-L-lysyl(27)-[histone H3] + 2-oxoglutarate + O2 = N(6)-methyl-L-lysyl(27)-[histone H3] + formaldehyde + succinate + CO2. Its function is as follows. Histone demethylase that demethylates 'Lys-27' (H3K27me) of histone H3, thus acting as a positive regulator of gene expression. Demethylates both tri- (H3K27me3) and di-methylated (H3K27me2) H3K27me. Also demethylates H3K4me3/2 and H3K36me3/2 in an in vitro assay. Involved in the transcriptional regulation of hundreds of genes regulating developmental patterning and responses to various stimuli. Binds DNA via its four zinc fingers in a sequence-specific manner, 5'-CTCTG(C/T)T(C/T)-3' (5'-CTCTGYTY-3'), with a preference for hypo-methylated status (e.g. cytosine methylation), to promote the demethylation of H3K27me3 and recruit the chromatin remodeler BRM in order to activate gene expression. Participates in the regulation of organ boundary formation. Bind mostly motifs located in active chromatin states which are depleted for heterochromatic modifications. Involved in the regulation of flowering time by repressing FLOWERING LOCUS C (FLC) expression. Stimulates lateral roots formation (e.g. primordium initiation and emergence) via the epigenetic de-repression of PIN genes such as PIN1, PIN3 and PIN7 directly by modulating the methylation status of their loci. Interacts with the NF-Y complex to regulate SOC1. Mediates the recruitment of BRM to its target loci. Together with EEN, involved in the epigenetic chromatin-dependent regulatory mechanism that monitors the expression of the essential multifunctional plant stress regulator EIN2 via H3K27me3 repressive histone demethylation and histone variant H2A.Z eviction, thus modulating responses to ethylene (ET), especially during embryogenesis. Eluviates seed dormancy by triggering abscisic acid (ABA) catabolism in seeds via the induction of CYP707A1 and CYP707A3 expression, genes involved in ABA degradation; binds directly to CYP707A1 and CYP707A3 loci to reduce their H3K27me3 levels in developing siliques. Required for systemic acquired resistance (SAR) toward pathogenic bacteria (e.g. Pseudomonas syringae pv tomato DC3000 (avrPto)). Together with FLD and MSI4/FVE, contributes to dehydroabietinal-dependent (DA, a diterpenoid tricyclic diterpene) activation of flowering ans SAR. Binds to the HSFA2 chromatin region to alleviate H3K27me3 repressive marks and trigger its expression in response to heat in a BRM-dependent manner. Involved in the mechanisms necessary for quick response to heat and subsequent heritable transgenerational memory of heat acclimation (global warming) such as early flowering and attenuated immunity; this process includes epigenetic regulation as well as post-transcriptional gene silencing (PTGS). In response to heat, HSFA2 is activated and promotes the expression of REF6 which in turn derepresses HSFA2, thus establishing a heritable feedback loop able to trigger SGIP1 and subsequent SGIP1-mediated SGS3 degradation; this prevents the biosynthesis of trans-acting siRNA (tasiRNA) and leads to the release of HTT5, which drives early flowering but attenuates immunity. In terms of biological role, involved in the maintenance of H3K27me1 histone marks on euchromatin in a PRC2-dependent manner, to maintain low-level basal expression of corresponding genes. Together with ELF6, required for H3K27me3 resetting (especially in constitutive heterochromatin within the pericentromeric regions) and transgenerational inheritance of histone marks, thus acting in safeguarding genome and epigenome integrity during sexual reproduction. In Arabidopsis thaliana (Mouse-ear cress), this protein is Lysine-specific demethylase REF6.